We begin with the raw amino-acid sequence, 187 residues long: V-type ATP synthase subunit E (187 aa).

It belongs to the V-ATPase E subunit family.

In terms of biological role, produces ATP from ADP in the presence of a proton gradient across the membrane. The protein is V-type ATP synthase subunit E of Geotalea uraniireducens (strain Rf4) (Geobacter uraniireducens).